The following is a 259-amino-acid chain: Flap endonuclease Xni (259 aa).

D109 provides a ligand contact to Mg(2+). A 5'-3' exonuclease domain is found at 165–255 (LKPEQLADYW…FNLQDIRYEK (91 aa)). Positions 176, 177, 187, and 190 each coordinate K(+). The interaction with DNA stretch occupies residues 189-194 (GVGPKA).

This sequence belongs to the Xni family. It depends on Mg(2+) as a cofactor. K(+) is required as a cofactor.

In terms of biological role, has flap endonuclease activity. During DNA replication, flap endonucleases cleave the 5'-overhanging flap structure that is generated by displacement synthesis when DNA polymerase encounters the 5'-end of a downstream Okazaki fragment. In Aliivibrio fischeri (strain ATCC 700601 / ES114) (Vibrio fischeri), this protein is Flap endonuclease Xni.